Consider the following 53-residue polypeptide: Photoreceptor disk component PRCD (53 aa).

A lipid anchor (S-palmitoyl cysteine) is attached at cysteine 2. The interval proline 24–lysine 53 is disordered. Over residues glycine 35–threonine 45 the composition is skewed to polar residues.

The protein belongs to the PRCD family. In terms of assembly, interacts with RHO/rhodopsin; the interaction promotes PRCD stability. Palmitoylated at Cys-2. Palmitoylation is essential for protein stability and trafficking to the photoreceptor outer segment, but does not appear to be essential for membrane localization. Probably palmitoylated by ZDHHC3. Post-translationally, phosphorylated. As to expression, expressed in retina, where it localizes to both rod and cone photoreceptors (at protein level).

Its subcellular location is the cell projection. It is found in the cilium. The protein resides in the photoreceptor outer segment. The protein localises to the membrane. It localises to the endoplasmic reticulum. Its subcellular location is the golgi apparatus. Involved in vision. The protein is Photoreceptor disk component PRCD of Mus musculus (Mouse).